The chain runs to 311 residues: Meiotically up-regulated gene 146 protein (311 aa).

It localises to the cytoplasm. Its subcellular location is the nucleus. Functionally, has a role in sporulation. In Schizosaccharomyces pombe (strain 972 / ATCC 24843) (Fission yeast), this protein is Meiotically up-regulated gene 146 protein (mug146).